The chain runs to 313 residues: Carbamate kinase 2 (313 aa).

Belongs to the carbamate kinase family.

The protein localises to the cytoplasm. The enzyme catalyses hydrogencarbonate + NH4(+) + ATP = carbamoyl phosphate + ADP + H2O + H(+). The protein operates within metabolic intermediate metabolism; carbamoyl phosphate degradation; CO(2) and NH(3) from carbamoyl phosphate: step 1/1. The chain is Carbamate kinase 2 (arcC2) from Staphylococcus aureus (strain bovine RF122 / ET3-1).